A 75-amino-acid polypeptide reads, in one-letter code: MPHIDIKCFPRELDEQQKAALAADITDVIIRHLNSKDSSISISLQQIQPESWQAIWDAEIAPQMEALIKKPGYSM.

Proline 2 serves as the catalytic Proton acceptor; via imino nitrogen.

It belongs to the 4-oxalocrotonate tautomerase family. PptA subfamily. In terms of assembly, homodimer.

It is found in the cytoplasm. The protein is Tautomerase PptA of Escherichia coli O127:H6 (strain E2348/69 / EPEC).